Reading from the N-terminus, the 119-residue chain is Flagellar transcriptional regulator FlhD (119 aa).

Belongs to the FlhD family. In terms of assembly, homodimer; disulfide-linked. Forms a heterohexamer composed of two FlhC and four FlhD subunits. Each FlhC binds a FlhD dimer, forming a heterotrimer, and a hexamer assembles by dimerization of two heterotrimers.

The protein resides in the cytoplasm. Functions in complex with FlhC as a master transcriptional regulator that regulates transcription of several flagellar and non-flagellar operons by binding to their promoter region. Activates expression of class 2 flagellar genes, including fliA, which is a flagellum-specific sigma factor that turns on the class 3 genes. Also regulates genes whose products function in a variety of physiological pathways. The polypeptide is Flagellar transcriptional regulator FlhD (Cronobacter sakazakii (strain ATCC BAA-894) (Enterobacter sakazakii)).